The following is a 625-amino-acid chain: DNA-directed RNA polymerase subunit gamma (625 aa).

Positions 71, 73, 86, and 89 each coordinate Zn(2+). Asp467, Asp469, and Asp471 together coordinate Mg(2+).

It belongs to the RNA polymerase beta' chain family. RpoC1 subfamily. In terms of assembly, in cyanobacteria the RNAP catalytic core is composed of 2 alpha, 1 beta, 1 beta', 1 gamma and 1 omega subunit. When a sigma factor is associated with the core the holoenzyme is formed, which can initiate transcription. Mg(2+) serves as cofactor. The cofactor is Zn(2+).

It catalyses the reaction RNA(n) + a ribonucleoside 5'-triphosphate = RNA(n+1) + diphosphate. DNA-dependent RNA polymerase catalyzes the transcription of DNA into RNA using the four ribonucleoside triphosphates as substrates. The polypeptide is DNA-directed RNA polymerase subunit gamma (Rippkaea orientalis (strain PCC 8801 / RF-1) (Cyanothece sp. (strain PCC 8801))).